The chain runs to 488 residues: Probable apyrase 5 (488 aa).

Positions 1–26 (MDALKVQILPDNQSSPSSTHMLTKPK) are disordered. Over 1-32 (MDALKVQILPDNQSSPSSTHMLTKPKSKKATK) the chain is Cytoplasmic. The segment covering 10 to 21 (PDNQSSPSSTHM) has biased composition (polar residues). The chain crosses the membrane as a helical; Signal-anchor for type II membrane protein span at residues 33-53 (SIAMLIVASLAITLGLLFVFS). Residues 54-488 (SNSVMFSASF…GKSRKMIGFK (435 aa)) lie on the Extracellular side of the membrane. 73-83 (VIIDAGSSGTR) provides a ligand contact to ATP. Glutamate 196 functions as the Proton acceptor in the catalytic mechanism. Residue 220–230 (GIVELGGASAQ) coordinates ATP. Asparagine 251 is a glycosylation site (N-linked (GlcNAc...) asparagine).

Belongs to the GDA1/CD39 NTPase family. The cofactor is Ca(2+). As to expression, highly expressed in young rosette leaves but only weakly in roots.

Its subcellular location is the membrane. It carries out the reaction a ribonucleoside 5'-triphosphate + 2 H2O = a ribonucleoside 5'-phosphate + 2 phosphate + 2 H(+). Functionally, catalyzes the hydrolysis of phosphoanhydride bonds of nucleoside tri- and di-phosphates. The chain is Probable apyrase 5 (APY5) from Arabidopsis thaliana (Mouse-ear cress).